Consider the following 317-residue polypeptide: MIIVTGAAGFIGSNLVKALNNLGRSDIIAVDDLTDGTKMFNLADCEIADYLDKADFIEQIAQGQFDGKVEVIFHQGACSSTTEWDGKFMMANNYEYSKTLLHFCERNGSQFIYASSASVYGGSDKFIEQRELEKPLNVYAYSKFLFDQYVRQHNFTTQVAGLRYFNVYGPREQHKGGMASVAFHFNNQIKASGICRLFQGHDGFEDGKQLRDFVYVEDVVKVNLWLWQNPGISGVYNCGTGQAQSFNDVANAVIAYHGKGEIEYIPFPDKLKGAYQSYTQADLTQLRAAGYTQAFKTVEEGVPEYLDWLAAQHFIGQ.

NADP(+) is bound by residues 10–11 (FI), 31–32 (DD), Lys-38, Lys-53, 75–79 (QGACS), and Asn-92. The active-site Proton acceptor is Tyr-139. Lys-143 is a binding site for NADP(+). Asn-166 is a substrate binding site. NADP(+) is bound by residues Val-167 and Lys-175. The Proton acceptor role is filled by Lys-175. Substrate contacts are provided by residues Gly-177, His-184, 198–201 (FQGH), Arg-211, and Tyr-275.

The protein belongs to the NAD(P)-dependent epimerase/dehydratase family. HldD subfamily. As to quaternary structure, homopentamer. The cofactor is NADP(+).

The enzyme catalyses ADP-D-glycero-beta-D-manno-heptose = ADP-L-glycero-beta-D-manno-heptose. It functions in the pathway nucleotide-sugar biosynthesis; ADP-L-glycero-beta-D-manno-heptose biosynthesis; ADP-L-glycero-beta-D-manno-heptose from D-glycero-beta-D-manno-heptose 7-phosphate: step 4/4. Catalyzes the interconversion between ADP-D-glycero-beta-D-manno-heptose and ADP-L-glycero-beta-D-manno-heptose via an epimerization at carbon 6 of the heptose. This chain is ADP-L-glycero-D-manno-heptose-6-epimerase, found in Shewanella loihica (strain ATCC BAA-1088 / PV-4).